Consider the following 147-residue polypeptide: Large ribosomal subunit protein uL13 (147 aa).

It belongs to the universal ribosomal protein uL13 family. In terms of assembly, part of the 50S ribosomal subunit.

Its function is as follows. This protein is one of the early assembly proteins of the 50S ribosomal subunit, although it is not seen to bind rRNA by itself. It is important during the early stages of 50S assembly. This Rhodococcus jostii (strain RHA1) protein is Large ribosomal subunit protein uL13.